The primary structure comprises 491 residues: Cysteine--tRNA ligase (491 aa).

C31 lines the Zn(2+) pocket. The 'HIGH' region motif lies at 33 to 43 (PTVYGDAHLGH). Positions 226, 251, and 255 each coordinate Zn(2+). Positions 283–287 (KMGKS) match the 'KMSKS' region motif. Residue K286 participates in ATP binding.

It belongs to the class-I aminoacyl-tRNA synthetase family. Monomer. It depends on Zn(2+) as a cofactor.

Its subcellular location is the cytoplasm. It carries out the reaction tRNA(Cys) + L-cysteine + ATP = L-cysteinyl-tRNA(Cys) + AMP + diphosphate. The protein is Cysteine--tRNA ligase of Bacteroides fragilis (strain ATCC 25285 / DSM 2151 / CCUG 4856 / JCM 11019 / LMG 10263 / NCTC 9343 / Onslow / VPI 2553 / EN-2).